The primary structure comprises 651 residues: Intraflagellar transport protein 70A (651 aa).

TPR repeat units follow at residues 8 to 41 (DGEYTATIYKLIKEARYGEAIQILSNELQKQYRS), 42 to 75 (RAGLSLLGYCYYQIQDFVNAADCYEQLIQITPEV), 140 to 173 (PESEINMGCLLYKEGHYEEACKKFITAMQVMGYK), 175 to 207 (DLSYNIALCYYSMKQYAPALKHIADIIERGIRE), 372 to 405 (LTEQMRKLTKQVQEARHNRDDEAVKKAVNEYDET), 410 to 443 (IPVLMAQAKIYWNMENYQMVEKIFRKSVEFCNEH), and 445 to 478 (IWKLNVAHVLFMQDNKYKEAIGFYEPIVKKHYDN). Residues 494–521 (YIMTSQNEEAEELMRKIEKEEEQIAYEN) are a coiled coil. The stretch at 530 to 563 (CIVNLVIGTLYCAKGNYEFGISRVIKSLEPYNKK) is one TPR 8 repeat.

The protein belongs to the TTC30/dfy-1/fleer family.

It localises to the cell projection. Its subcellular location is the cilium. Required for polyglutamylation of axonemal tubulin. Plays a role in anterograde intraflagellar transport (IFT), the process by which cilia precursors are transported from the base of the cilium to the site of their incorporation at the tip. The chain is Intraflagellar transport protein 70A (ift70a) from Xenopus tropicalis (Western clawed frog).